Consider the following 709-residue polypeptide: Threonine--tRNA ligase, mitochondrial 1 (709 aa).

Residues 1–21 (MLLRLTARSIRRFTTSSSSLP) constitute a mitochondrion transit peptide. Residues 73-135 (DPIKVTLPDG…EGDCKLELFK (63 aa)) enclose the TGS domain. 3 residues coordinate Zn(2+): cysteine 407, histidine 458, and histidine 584.

It belongs to the class-II aminoacyl-tRNA synthetase family.

The protein localises to the mitochondrion. The protein resides in the cytoplasm. It is found in the cytosol. The enzyme catalyses tRNA(Thr) + L-threonine + ATP = L-threonyl-tRNA(Thr) + AMP + diphosphate + H(+). This chain is Threonine--tRNA ligase, mitochondrial 1, found in Arabidopsis thaliana (Mouse-ear cress).